The primary structure comprises 1216 residues: AF4/FMR2 family member 1 (1216 aa).

Disordered stretches follow at residues 1-52 (MAAH…KGDE), 68-104 (KEFLSSKSHPHRLDGSEDRPGKPRYPLGHDRGNGAAS), 116-139 (IHTSAPGSRPVGNISHSPKMAQPR), 152-217 (PRLT…VSSK), 244-275 (AVTSLGSAPPQPPCQTFPPPPLPSKSAAMQQK), and 352-728 (SWPP…RTSG). 2 stretches are compositionally biased toward basic and acidic residues: residues 9–35 (NEDRNLLRIREKERRNQEAHQEKEAFP) and 78–99 (HRLDGSEDRPGKPRYPLGHDRG). Basic and acidic residues predominate over residues 166–182 (RKCDRRAEGDSAPERKL). A phosphoserine mark is found at serine 183, serine 191, and serine 197. The span at 207 to 217 (SKAHSSGVSSK) shows a compositional bias: low complexity. Positions 252–266 (PPQPPCQTFPPPPLP) are enriched in pro residues. The segment covering 383–406 (PATQSQKQYDTPSKTHPNPQQGTS) has biased composition (polar residues). Positions 408-424 (LEDDLQLSDSEDSDTEQ) are enriched in acidic residues. The span at 429 to 438 (PPSPPAPPSA) shows a compositional bias: pro residues. Positions 457-484 (ESSESDSSSDSESESSSSDSEEEEENEP) are enriched in acidic residues. Lysine 682 bears the N6-acetyllysine mark. Residues 710–728 (SQGPSHSSRGSSGSVRTSG) show a composition bias toward low complexity. Phosphoserine occurs at positions 755 and 760. Disordered regions lie at residues 777–969 (RIPQ…RQQA) and 1094–1125 (APSPCTARSTGVPSPLSPMPSPASSVGSQSSA). Over residues 789-808 (RKAEDKQLSAGKKQDSETKS) the composition is skewed to basic and acidic residues. 4 stretches are compositionally biased toward low complexity: residues 824–846 (KKSTVTRDTNWISRRASSSSSHT), 867–886 (PPASASSVSSSSSSQKPSRP), 902–915 (PPRSASSTKSSSTD), and 1115–1125 (PASSVGSQSSA).

Belongs to the AF4 family. In terms of assembly, component of the super elongation complex (SEC), at least composed of EAF1, EAF2, CDK9, MLLT3/AF9, AFF (AFF1 or AFF4), the P-TEFb complex and ELL (ELL, ELL2 or ELL3).

The protein localises to the nucleus. The protein is AF4/FMR2 family member 1 (Aff1) of Mus musculus (Mouse).